A 274-amino-acid polypeptide reads, in one-letter code: NH(3)-dependent NAD(+) synthetase (274 aa).

46-53 provides a ligand contact to ATP; it reads GISGGQDS. D52 is a Mg(2+) binding site. A deamido-NAD(+)-binding site is contributed by R140. T160 is a binding site for ATP. Position 165 (E165) interacts with Mg(2+). Residues K173 and D180 each coordinate deamido-NAD(+). Residues K189 and T211 each coordinate ATP. 260–261 is a deamido-NAD(+) binding site; that stretch reads HK.

This sequence belongs to the NAD synthetase family. As to quaternary structure, homodimer.

It carries out the reaction deamido-NAD(+) + NH4(+) + ATP = AMP + diphosphate + NAD(+) + H(+). It participates in cofactor biosynthesis; NAD(+) biosynthesis; NAD(+) from deamido-NAD(+) (ammonia route): step 1/1. In terms of biological role, catalyzes the ATP-dependent amidation of deamido-NAD to form NAD. Uses ammonia as a nitrogen source. The protein is NH(3)-dependent NAD(+) synthetase of Streptococcus equi subsp. zooepidemicus (strain MGCS10565).